Reading from the N-terminus, the 299-residue chain is 4-hydroxy-tetrahydrodipicolinate synthase (299 aa).

Thr-47 lines the pyruvate pocket. Residue Tyr-136 is the Proton donor/acceptor of the active site. The active-site Schiff-base intermediate with substrate is the Lys-164. Ala-205 is a pyruvate binding site.

Belongs to the DapA family. Homotetramer; dimer of dimers.

Its subcellular location is the cytoplasm. The enzyme catalyses L-aspartate 4-semialdehyde + pyruvate = (2S,4S)-4-hydroxy-2,3,4,5-tetrahydrodipicolinate + H2O + H(+). It functions in the pathway amino-acid biosynthesis; L-lysine biosynthesis via DAP pathway; (S)-tetrahydrodipicolinate from L-aspartate: step 3/4. Catalyzes the condensation of (S)-aspartate-beta-semialdehyde [(S)-ASA] and pyruvate to 4-hydroxy-tetrahydrodipicolinate (HTPA). The chain is 4-hydroxy-tetrahydrodipicolinate synthase from Pediococcus pentosaceus (strain ATCC 25745 / CCUG 21536 / LMG 10740 / 183-1w).